A 465-amino-acid polypeptide reads, in one-letter code: Ribulose bisphosphate carboxylase large chain (465 aa).

The residue at position 4 (K4) is an N6,N6,N6-trimethyllysine. 2 residues coordinate substrate: N113 and T163. Residue K165 is the Proton acceptor of the active site. Residue K167 coordinates substrate. Positions 191, 193, and 194 each coordinate Mg(2+). The residue at position 191 (K191) is an N6-carboxylysine. The active-site Proton acceptor is the H284. The substrate site is built by R285, H317, and S369.

The protein belongs to the RuBisCO large chain family. Type I subfamily. In terms of assembly, heterohexadecamer of 8 large chains and 8 small chains. It depends on Mg(2+) as a cofactor.

Its subcellular location is the plastid. The protein localises to the chloroplast. It catalyses the reaction 2 (2R)-3-phosphoglycerate + 2 H(+) = D-ribulose 1,5-bisphosphate + CO2 + H2O. The enzyme catalyses D-ribulose 1,5-bisphosphate + O2 = 2-phosphoglycolate + (2R)-3-phosphoglycerate + 2 H(+). Its function is as follows. RuBisCO catalyzes two reactions: the carboxylation of D-ribulose 1,5-bisphosphate, the primary event in carbon dioxide fixation, as well as the oxidative fragmentation of the pentose substrate in the photorespiration process. Both reactions occur simultaneously and in competition at the same active site. This is Ribulose bisphosphate carboxylase large chain from Sarracenia flava (Yellow pitcher plant).